The following is a 435-amino-acid chain: Ornithine decarboxylase (435 aa).

The residue at position 76 (lysine 76) is an N6-(pyridoxal phosphate)lysine. Residues serine 207, glycine 244, and 283 to 286 (EPGR) each bind pyridoxal 5'-phosphate. 339-340 (FD) is a binding site for substrate. Cysteine 368 acts as the Proton donor; shared with dimeric partner in catalysis. Aspartate 369 provides a ligand contact to substrate. Tyrosine 397 is a binding site for pyridoxal 5'-phosphate.

This sequence belongs to the Orn/Lys/Arg decarboxylase class-II family. Homodimer. Only the dimer is catalytically active, as the active sites are constructed of residues from both monomers. Requires pyridoxal 5'-phosphate as cofactor.

The catalysed reaction is L-ornithine + H(+) = putrescine + CO2. The protein operates within amine and polyamine biosynthesis; putrescine biosynthesis via L-ornithine pathway; putrescine from L-ornithine: step 1/1. Inhibited by antizyme (AZ) in response to polyamine levels. AZ inhibits the assembly of the functional homodimer by binding to ODC monomers and targeting them for ubiquitin-independent proteolytic destruction by the 26S proteasome. In terms of biological role, catalyzes the first and rate-limiting step of polyamine biosynthesis that converts ornithine into putrescine, which is the precursor for the polyamines, spermidine and spermine. Polyamines are essential for cell proliferation and are implicated in cellular processes, ranging from DNA replication to apoptosis. This Panagrellus redivivus (Microworm) protein is Ornithine decarboxylase (ODC).